Reading from the N-terminus, the 384-residue chain is S-adenosylmethionine synthase (384 aa).

Residue H15 coordinates ATP. Residue D17 coordinates Mg(2+). Position 43 (E43) interacts with K(+). E56 and Q99 together coordinate L-methionine. The flexible loop stretch occupies residues 99–109; that stretch reads QSPDINQGVDR. ATP contacts are provided by residues 164–166, 230–231, D239, 245–246, A262, and K266; these read DAK, RF, and RK. D239 is an L-methionine binding site. K270 serves as a coordination point for L-methionine.

It belongs to the AdoMet synthase family. In terms of assembly, homotetramer; dimer of dimers. Mg(2+) is required as a cofactor. It depends on K(+) as a cofactor.

The protein localises to the cytoplasm. It catalyses the reaction L-methionine + ATP + H2O = S-adenosyl-L-methionine + phosphate + diphosphate. Its pathway is amino-acid biosynthesis; S-adenosyl-L-methionine biosynthesis; S-adenosyl-L-methionine from L-methionine: step 1/1. Functionally, catalyzes the formation of S-adenosylmethionine (AdoMet) from methionine and ATP. The overall synthetic reaction is composed of two sequential steps, AdoMet formation and the subsequent tripolyphosphate hydrolysis which occurs prior to release of AdoMet from the enzyme. The chain is S-adenosylmethionine synthase from Edwardsiella ictaluri (strain 93-146).